The primary structure comprises 289 residues: E3 ubiquitin-protein ligase MARCHF1 (289 aa).

The interval 1–66 (MLGWCEAIAR…SPTTGTAPRS (66 aa)) is responsible for low stability. The segment at 13–69 (HRIPNNTRTPEISGDLADASQTSTLNEKSPGRSASRSSNISKASSPTTGTAPRSQSR) is disordered. The segment covering 43–58 (GRSASRSSNISKASSP) has biased composition (low complexity). The segment covering 59-69 (TTGTAPRSQSR) has biased composition (polar residues). The segment at 72 to 133 (VCPSTQDICR…ELCKYDFIME (62 aa)) adopts an RING-CH-type zinc-finger fold. Cysteine 80, cysteine 83, cysteine 97, cysteine 99, histidine 107, cysteine 110, cysteine 123, and cysteine 126 together coordinate Zn(2+). 2 helical membrane-spanning segments follow: residues 155–175 (IFCS…SLYV) and 197–217 (FWTK…FMYV). A responsible for down-regulation of CD86 and MHC class II cell surface expression region spans residues 222–279 (YVQLWRRLKAYNRVIFVQNCPDTAKKLEKNFSCNVNTDIKDAVVVPVPQTGANSLPSA).

Interacts with CD83; this interaction antagonizes MARCHF1-mediated MHC II and CD86 down-regulation. In terms of processing, ubiquitinated via ubiquitin-conjugating enzyme E2 D1/UBE2D1 independently of lysines, leading to proteolytic degradation. Post-translationally, has a short half-life. Instability/short half-life permits rapid changes that allow efficient induction of antigen presentation once antigen presenting cells, APCs, receive maturation signals. Small changes in protein levels significantly alter the cell surface display of MHC class II proteins. As to expression, expressed in antigen presenting cells, APCs, located in lymph nodes and spleen. Also expressed in lung. Expression is high in follicular B-cells, moderate in dendritic cells and low in splenic T-cells.

It localises to the golgi apparatus. Its subcellular location is the trans-Golgi network membrane. The protein localises to the lysosome membrane. The protein resides in the cytoplasmic vesicle membrane. It is found in the late endosome membrane. It localises to the early endosome membrane. Its subcellular location is the cell membrane. It catalyses the reaction S-ubiquitinyl-[E2 ubiquitin-conjugating enzyme]-L-cysteine + [acceptor protein]-L-lysine = [E2 ubiquitin-conjugating enzyme]-L-cysteine + N(6)-ubiquitinyl-[acceptor protein]-L-lysine.. The protein operates within protein modification; protein ubiquitination. Its function is as follows. E3 ubiquitin-protein ligase that mediates ubiquitination of TFRC, CD86, FAS and MHC class II proteins, such as HLA-DR alpha and beta, and promotes their subsequent endocytosis and sorting to lysosomes via multivesicular bodies. By constitutively ubiquitinating MHC class II proteins in immature dendritic cells, down-regulates their cell surface localization thus sequestering them in the intracellular endosomal system. Also regulates insulin sensitivity by controlling surface expression of the insulin receptor subunit beta/INSR by direct ubiquitination and degradation. (Microbial infection) Plays a role in iron metabolism by regulating the levels of the transferrin receptor TFRC during human cytomegalovirus infection, subsequently contributing to a proviral effect. The sequence is that of E3 ubiquitin-protein ligase MARCHF1 from Homo sapiens (Human).